Here is a 557-residue protein sequence, read N- to C-terminus: Glucose-6-phosphate isomerase (557 aa).

At A2 the chain carries N-acetylalanine. Position 12 is an N6-acetyllysine (K12). S107 carries the post-translational modification Phosphoserine. K142 is subject to N6-acetyllysine. 159-160 (GS) serves as a coordination point for D-glucose 6-phosphate. Phosphoserine; by CK2 is present on S185. 210–215 (SKTFTT) provides a ligand contact to D-glucose 6-phosphate. T250 is subject to Phosphothreonine. D-glucose 6-phosphate-binding residues include Q354, E358, and H389. The active-site Proton donor is the E358. H389 is a catalytic residue. S455 carries the phosphoserine modification. K519 lines the D-glucose 6-phosphate pocket. Residue K519 is part of the active site.

This sequence belongs to the GPI family. As to quaternary structure, homodimer; in the catalytically active form. Monomer in the secreted form. Phosphorylation at Ser-185 by CK2 has been shown to decrease enzymatic activity and may contribute to secretion by a non-classical secretory pathway. Post-translationally, ISGylated.

The protein resides in the cytoplasm. Its subcellular location is the secreted. It carries out the reaction alpha-D-glucose 6-phosphate = beta-D-fructose 6-phosphate. Its pathway is carbohydrate degradation; glycolysis; D-glyceraldehyde 3-phosphate and glycerone phosphate from D-glucose: step 2/4. In terms of biological role, in the cytoplasm, catalyzes the conversion of glucose-6-phosphate to fructose-6-phosphate, the second step in glycolysis, and the reverse reaction during gluconeogenesis. Besides it's role as a glycolytic enzyme, also acts as a secreted cytokine: acts as an angiogenic factor (AMF) that stimulates endothelial cell motility. Acts as a neurotrophic factor, neuroleukin, for spinal and sensory neurons. It is secreted by lectin-stimulated T-cells and induces immunoglobulin secretion. The chain is Glucose-6-phosphate isomerase from Bos taurus (Bovine).